A 53-amino-acid chain; its full sequence is UPF0391 membrane protein YPTS_0599 (53 aa).

The next 2 helical transmembrane spans lie at 4-24 (WGII…GGLA) and 27-47 (AAWA…ISLF).

Belongs to the UPF0391 family.

It is found in the cell membrane. The sequence is that of UPF0391 membrane protein YPTS_0599 from Yersinia pseudotuberculosis serotype IB (strain PB1/+).